Reading from the N-terminus, the 371-residue chain is Putative glutamate--cysteine ligase 2 (371 aa).

Belongs to the glutamate--cysteine ligase type 2 family. YbdK subfamily. As to quaternary structure, homodimer.

It carries out the reaction L-cysteine + L-glutamate + ATP = gamma-L-glutamyl-L-cysteine + ADP + phosphate + H(+). ATP-dependent carboxylate-amine ligase which exhibits weak glutamate--cysteine ligase activity. The protein is Putative glutamate--cysteine ligase 2 of Cronobacter sakazakii (strain ATCC BAA-894) (Enterobacter sakazakii).